A 295-amino-acid polypeptide reads, in one-letter code: Inositol polyphosphate multikinase IPK2 (295 aa).

The disordered stretch occupies residues 1-21; sequence MASDLRPPEHQVAGHRASADK.

It belongs to the inositol phosphokinase (IPK) family.

The catalysed reaction is 1D-myo-inositol 1,4,5-trisphosphate + 2 ATP = 1D-myo-inositol 1,3,4,5,6-pentakisphosphate + 2 ADP + 2 H(+). It carries out the reaction 1D-myo-inositol 1,3,4,6-tetrakisphosphate + ATP = 1D-myo-inositol 1,3,4,5,6-pentakisphosphate + ADP + H(+). In terms of biological role, inositol phosphate kinase with a broad substrate specificity. Phosphorylates inositol 1,4,5-trisphosphate (Ins(1,4,5)P3), inositol 1,4,5,6-tetrakisphosphate (Ins(1,4,5,6)P4), inositol 1,3,4,5-tetrakisphosphate (Ins(1,3,4,5)P4), inositol 1,3,4,6-tetrakisphosphate (Ins(1,3,4,6)P4) and inositol 1,2,3,4,6-pentakisphosphate (Ins(1,2,3,4,6)P5) but not inositol 1,4-bisphosphate (Ins(1,4)P2), inositol 1,3,4-trisphosphate (Ins(1,3,4)P3), inositol 1,2,6-trisphosphate (Ins(1,2,6)P3), inositol 3,4,5,6-tetrakisphosphate (Ins(3,4,5,6)P4), inositol 1,3,4,5,6-pentakisphosphate (Ins(1,3,4,5,6)P5), inositol 1,2,4,5,6-pentakisphosphate (Ins(1,2,4,5,6)P5) or inositol hexakisphosphate (InsP6). Regulates pollen and root development probably through the regulation of InsP3-mediated calcium accumulation. The chain is Inositol polyphosphate multikinase IPK2 from Oryza sativa subsp. indica (Rice).